A 208-amino-acid polypeptide reads, in one-letter code: Large ribosomal subunit protein bL25 (208 aa).

It belongs to the bacterial ribosomal protein bL25 family. CTC subfamily. Part of the 50S ribosomal subunit; part of the 5S rRNA/L5/L18/L25 subcomplex. Contacts the 5S rRNA. Binds to the 5S rRNA independently of L5 and L18.

Its function is as follows. This is one of the proteins that binds to the 5S RNA in the ribosome where it forms part of the central protuberance. The chain is Large ribosomal subunit protein bL25 from Burkholderia pseudomallei (strain K96243).